The primary structure comprises 494 residues: Poly(3-hydroxybutyrate) depolymerase (494 aa).

Positions 1–25 (MAFNFIRAAAAGAAMALCGVGSVHA) are cleaved as a signal peptide. Ser-45 serves as the catalytic Nucleophile. Active-site charge relay system residues include Asp-132 and His-166. A Fibronectin type-III domain is found at 347-431 (APTGVSTSGA…AAASGTTLAA (85 aa)).

Belongs to the AB hydrolase superfamily. Lipase family.

The protein localises to the secreted. It catalyses the reaction [(3R)-hydroxybutanoate](n) + H2O = [(3R)-hydroxybutanoate](n-2) + (3R)-hydroxybutanoate dimer + H(+). It carries out the reaction [(3R)-hydroxybutanoate](n) + H2O = [(3R)-hydroxybutanoate](n-1) + (R)-3-hydroxybutanoate + H(+). The enzyme catalyses (3R)-hydroxybutanoate dimer + H2O = 2 (R)-3-hydroxybutanoate + H(+). Its function is as follows. Catalyzes the hydrolysis of poly(3-hydroxybutyrate) (PHB) film, producing the monomer and dimer of 3-hydroxybutyrate (3HB), while the 3HB trimer and tetramer are not formed. The chain is Poly(3-hydroxybutyrate) depolymerase from Delftia acidovorans (Pseudomonas acidovorans).